We begin with the raw amino-acid sequence, 529 residues long: PTS system alpha-glucoside-specific EIICB component (529 aa).

The 416-residue stretch at 1–416 folds into the PTS EIIC type-1 domain; the sequence is MMKKVQRFGG…MDLKTPGRED (416 aa). 12 helical membrane-spanning segments follow: residues 8–28, 59–79, 91–111, 130–150, 170–190, 198–218, 222–242, 272–292, 304–324, 328–348, 352–372, and 380–400; these read FGGAMMAPVLLFAFTGIVVGL, GWTVFRQMPILFAIGLPISLA, FALYTTFNYFVAAILKVFYGI, VPTLDTNLFGGILIAALVVYL, VFVYIVGFVVMIPCAFLTVLI, ISALQGFMKASGIFGVWIYTF, ILIPTGLHHFVYTPFVFGPAA, GGFALHGNSKIFGAPGIALAM, VAALLIPIIFTAVISGITEPL, FLFIAPVLFAVHACLAATMAA, AFGVVGNMGGGLLDFFFLNWI, and GTVIAQIVIGLIFTAIYFVVF. The PTS EIIB type-1 domain maps to 450–529; the sequence is AQKGAIILEA…ERIEEMMKKG (80 aa). Cysteine 472 functions as the Phosphocysteine intermediate; for EIIB activity in the catalytic mechanism.

The protein resides in the cell membrane. Functionally, the phosphoenolpyruvate-dependent sugar phosphotransferase system (sugar PTS), a major carbohydrate active -transport system, catalyzes the phosphorylation of incoming sugar substrates concomitantly with their translocation across the cell membrane. This system is probably involved in transport of the alpha-glucosides trehalulose, turanose, maltulose and palatinose. The protein is PTS system alpha-glucoside-specific EIICB component of Leptotrichia buccalis (strain ATCC 14201 / DSM 1135 / JCM 12969 / NCTC 10249 / C-1013-b).